The chain runs to 370 residues: S-adenosylmethionine decarboxylase proenzyme (370 aa).

Substrate is bound at residue Phe28. Catalysis depends on residues Glu29 and Glu32. Glu85 contributes to the substrate binding site. Ser86 serves as the catalytic Schiff-base intermediate with substrate; via pyruvic acid. Residue Ser86 is modified to Pyruvic acid (Ser); by autocatalysis. The active-site Proton donor; for catalytic activity is Cys100. Residues Ser249 and His262 each act as proton acceptor; for processing activity in the active site. Substrate is bound at residue Glu266.

Belongs to the eukaryotic AdoMetDC family. As to quaternary structure, forms a heterodimer with catalytically inactive AdoMetDC prozyme; heterodimerization is required to activate AdoMetDC. Pyruvate is required as a cofactor. In terms of processing, is synthesized initially as an inactive proenzyme. Formation of the active enzyme involves a self-maturation process in which the active site pyruvoyl group is generated from an internal serine residue via an autocatalytic post-translational modification. Two non-identical subunits are generated from the proenzyme in this reaction, and the pyruvate is formed at the N-terminus of the alpha chain, which is derived from the carboxyl end of the proenzyme. The post-translation cleavage follows an unusual pathway, termed non-hydrolytic serinolysis, in which the side chain hydroxyl group of the serine supplies its oxygen atom to form the C-terminus of the beta chain, while the remainder of the serine residue undergoes an oxidative deamination to produce ammonia and the pyruvoyl group blocking the N-terminus of the alpha chain.

It catalyses the reaction S-adenosyl-L-methionine + H(+) = S-adenosyl 3-(methylsulfanyl)propylamine + CO2. Its pathway is amine and polyamine biosynthesis; S-adenosylmethioninamine biosynthesis; S-adenosylmethioninamine from S-adenosyl-L-methionine: step 1/1. With respect to regulation, allosterically activated by AdoMetDC prozyme. Activated by putrescine and to a lesser extent by spermidine, norspermidine and spermine. Inhibited by 5'-([(Z)-4-amino-2-butenyl]methylamino)-5'-deoxyadenosine (MDL 73811). In association with the catalytically inactive AdoMetDC prozyme, catalyzes the decarboxylation of S-adenosyl-L-methionine which is essential for the biosynthesis of the polyamine spermidine. Required for growth and survival during the bloodstream life cycle stage. The chain is S-adenosylmethionine decarboxylase proenzyme from Trypanosoma brucei brucei.